The primary structure comprises 732 residues: Ionotropic receptor 40a (732 aa).

An N-terminal signal peptide occupies residues 1–19; that stretch reads MHKFLALGLLPYLLGLLNS. Residues asparagine 18, asparagine 235, and asparagine 299 are each glycosylated (N-linked (GlcNAc...) asparagine). Over 20–369 the chain is Extracellular; it reads TRLTFIGNDE…RPFKQDIWPH (350 aa). The chain crosses the membrane as a helical span at residues 370–390; sequence LILTIIFSGPIFYGIIALPYI. Over 391 to 465 the chain is Cytoplasmic; that stretch reads WRRRWANSDV…NELHNGYRAK (75 aa). The helical transmembrane segment at 466-486 threads the bilayer; that stretch reads FLTIVYWIAATYVLADVYSAQ. The Extracellular portion of the chain corresponds to 487-688; that stretch reads LTSQFARPAR…LNLRMLQGAF (202 aa). Asparagine 531 carries N-linked (GlcNAc...) asparagine glycosylation. A helical transmembrane segment spans residues 689–709; that stretch reads IALGVGSLAAGVILLLEIVFI. The Cytoplasmic segment spans residues 710 to 732; it reads KLDQARLWMLCSRLQWIRYDRKV.

Belongs to the glutamate-gated ion channel (TC 1.A.10.1) family. In terms of tissue distribution, in the antenna, detected in sacculus neurons which innervate the first and second chambers (at protein level).

The protein resides in the cell membrane. Its function is as follows. Integral part of a neural sensory system in the antenna that provides the neural basis for the response to environmental changes in humidity (hygrosensation). Together with Ir25a and Ir93a, mediates the response of the hygrosensory sacculus neurons to changes in relative humidity and is required for dry detection behavior. This is Ionotropic receptor 40a from Drosophila melanogaster (Fruit fly).